Reading from the N-terminus, the 146-residue chain is Anti-sigma F factor (146 aa).

It belongs to the anti-sigma-factor family.

The enzyme catalyses L-seryl-[protein] + ATP = O-phospho-L-seryl-[protein] + ADP + H(+). It carries out the reaction L-threonyl-[protein] + ATP = O-phospho-L-threonyl-[protein] + ADP + H(+). In terms of biological role, binds to sigma F and blocks its ability to form an RNA polymerase holoenzyme (E-sigma F). Phosphorylates SpoIIAA on a serine residue. This phosphorylation may enable SpoIIAA to act as an anti-anti-sigma factor that counteracts SpoIIAB and thus releases sigma F from inhibition. In Oceanobacillus iheyensis (strain DSM 14371 / CIP 107618 / JCM 11309 / KCTC 3954 / HTE831), this protein is Anti-sigma F factor.